Consider the following 184-residue polypeptide: MIKEIKQDGEARMQKTLEALESTFSKVRTGRAHPGMLSGVMVSYYGSDTPLNQVASVNVEDSRTLLVQPFDRTMVQAIDKAIREADLGLNPMTADVIRVPMPALTEETRRDMQKLARGEAENSRVSIRNIRRDMMNDIKELAKEKEISEDDEHRASDDIQKITDKYIETIDSRLSKKESDLMSV.

It belongs to the RRF family.

The protein localises to the cytoplasm. Responsible for the release of ribosomes from messenger RNA at the termination of protein biosynthesis. May increase the efficiency of translation by recycling ribosomes from one round of translation to another. This chain is Ribosome-recycling factor, found in Psychrobacter arcticus (strain DSM 17307 / VKM B-2377 / 273-4).